A 1098-amino-acid chain; its full sequence is Unconventional myosin-If (1098 aa).

Residues 17-690 form the Myosin motor domain; sequence SGVDDMVLLP…SLFLLEEVRE (674 aa). 110 to 117 contributes to the ATP binding site; it reads GESGAGKT. An actin-binding region spans residues 579 to 589; that stretch reads PHYIRCIKPNE. One can recognise an IQ domain in the interval 693–722; sequence FDGFARTIQKAWRRHVAVRKYEEMREEASN. In terms of domain architecture, TH1 spans 728–917; sequence KERRRNSINR…GRTLTVSVGD (190 aa). Disordered stretches follow at residues 913–1009 and 1021–1044; these read VSVG…EFLN and KRSV…THGP. Residues 924–937 are compositionally biased toward basic residues; sequence KPTRKGMAKGKPRR. Residue Ser1023 is modified to Phosphoserine. Residues 1041 to 1098 form the SH3 domain; the sequence is THGPRCRALYQYVGQDVDELSFNVNEVIEILMEDPSGWWKGRLHGQEGLFPGNYVEKI.

It belongs to the TRAFAC class myosin-kinesin ATPase superfamily. Myosin family.

Functionally, myosins are actin-based motor molecules with ATPase activity. Unconventional myosins serve in intracellular movements. Their highly divergent tails are presumed to bind to membranous compartments, which would be moved relative to actin filaments. The chain is Unconventional myosin-If (MYO1F) from Homo sapiens (Human).